A 290-amino-acid polypeptide reads, in one-letter code: Phosphatidylglycerol--prolipoprotein diacylglyceryl transferase (290 aa).

Transmembrane regions (helical) follow at residues 21 to 41 (VSLH…MWLA), 60 to 80 (LLYA…VLFY), 98 to 118 (GGMS…WFAH), 124 to 144 (FFQV…AGRL), 198 to 218 (SQLY…NLFI), 224 to 244 (IGSV…LVEF), and 258 to 278 (VISM…IMMA). Position 143 (arginine 143) interacts with a 1,2-diacyl-sn-glycero-3-phospho-(1'-sn-glycerol).

Belongs to the Lgt family.

It is found in the cell inner membrane. It catalyses the reaction L-cysteinyl-[prolipoprotein] + a 1,2-diacyl-sn-glycero-3-phospho-(1'-sn-glycerol) = an S-1,2-diacyl-sn-glyceryl-L-cysteinyl-[prolipoprotein] + sn-glycerol 1-phosphate + H(+). Its pathway is protein modification; lipoprotein biosynthesis (diacylglyceryl transfer). In terms of biological role, catalyzes the transfer of the diacylglyceryl group from phosphatidylglycerol to the sulfhydryl group of the N-terminal cysteine of a prolipoprotein, the first step in the formation of mature lipoproteins. This chain is Phosphatidylglycerol--prolipoprotein diacylglyceryl transferase, found in Sodalis glossinidius (strain morsitans).